Here is an 80-residue protein sequence, read N- to C-terminus: DNA-binding protein HU-like (80 aa).

The protein belongs to the bacterial histone-like protein family.

Histone-like DNA-binding protein which is capable of wrapping DNA to stabilize it, and thus to prevent its denaturation under extreme environmental conditions. The polypeptide is DNA-binding protein HU-like (Rickettsia rickettsii (strain Sheila Smith)).